We begin with the raw amino-acid sequence, 441 residues long: Probable indole-3-acetic acid-amido synthetase GH3.9 (441 aa).

This sequence belongs to the IAA-amido conjugating enzyme family. In terms of tissue distribution, expressed in etiolated seedlings and roots.

Functionally, may catalyze the synthesis of indole-3-acetic acid (IAA)-amino acid conjugates, providing a mechanism for the plant to cope with the presence of excess auxin. The sequence is that of Probable indole-3-acetic acid-amido synthetase GH3.9 (GH3.9) from Oryza sativa subsp. japonica (Rice).